A 122-amino-acid chain; its full sequence is Large ribosomal subunit protein uL18 (122 aa).

This sequence belongs to the universal ribosomal protein uL18 family. Part of the 50S ribosomal subunit; part of the 5S rRNA/L5/L18/L25 subcomplex. Contacts the 5S and 23S rRNAs.

Functionally, this is one of the proteins that bind and probably mediate the attachment of the 5S RNA into the large ribosomal subunit, where it forms part of the central protuberance. This Desulforamulus reducens (strain ATCC BAA-1160 / DSM 100696 / MI-1) (Desulfotomaculum reducens) protein is Large ribosomal subunit protein uL18.